The primary structure comprises 970 residues: MATCIGEKIEDFKVGNLLGKGSFAGVYRAESIHTGLEVAIKMIDKKAMYKAGMVQRVQNEVKIHCQLKHPSILELYNYFEDSNYVYLVLEMCHNGEMNRYLKNRVKPFSENEARHFMHQIITGMLYLHSHGILHRDLTLSNLLLTRNMNIKIADFGLATQLKMPHEKHYTLCGTPNYISPEIATRSAHGLESDVWSLGCMFYTLLIGRPPFDTDTVKNTLNKVVLADYEMPSFLSIEAKDLIHQLLRRNPADRLSLSSVLDHPFMSRNSSTKSKDLGTVEDSIDSGHATISTAITASSSTSISGSLFDKRRLLIGQPLPNKMTVFPKNKSSTDFSSSGDGNSFYTQWGNQETSNSGRGRVIQDAEERPHSRYLRRAYSSDRSGTSNSQSQAKTYTMERCHSAEMLSVSKRSGGGENEERYSPTDNNANIFNFFKEKTSSSSGSFERPDNNQALSNHLCPGKTPFPFADPTPQTETVQQWFGNLQINAHLRKTTEYDSISPNRDFQGHPDLQKDTSKNAWTDTKVKKNSDASDNAHSVKQQNTMKYMTALHSKPEIIQQECVFGSDPLSEQSKTRGMEPPWGYQNRTLRSITSPLVAHRLKPIRQKTKKAVVSILDSEEVCVELVKEYASQEYVKEVLQISSDGNTITIYYPNGGRGFPLADRPPSPTDNISRYSFDNLPEKYWRKYQYASRFVQLVRSKSPKITYFTRYAKCILMENSPGADFEVWFYDGVKIHKTEDFIQVIEKTGKSYTLKSESEVNSLKEEIKMYMDHANEGHRICLALESIISEEERKTRSAPFFPIIIGRKPGSTSSPKALSPPPSVDSNYPTRERASFNRMVMHSAASPTQAPILNPSMVTNEGLGLTTTASGTDISSNSLKDCLPKSAQLLKSVFVKNVGWATQLTSGAVWVQFNDGSQLVVQAGVSSISYTSPNGQTTRYGENEKLPDYIKQKLQCLSSILLMFSNPTPNFH.

One can recognise a Protein kinase domain in the interval 12–265 (FKVGNLLGKG…LSSVLDHPFM (254 aa)). Residues 18–26 (LGKGSFAGV) and Lys41 contribute to the ATP site. Lys45 and Lys46 each carry N6-acetyllysine. Asp136 (proton acceptor) is an active-site residue. Disordered regions lie at residues 323 to 458 (TVFP…NHLC) and 497 to 538 (SISP…HSVK). The segment covering 328–356 (NKSSTDFSSSGDGNSFYTQWGNQETSNSG) has biased composition (polar residues). Residues 360–369 (VIQDAEERPH) show a composition bias toward basic and acidic residues. A compositionally biased stretch (polar residues) spans 379–393 (SDRSGTSNSQSQAKT). Ser401 is modified (phosphoserine). The span at 438 to 454 (SSSSGSFERPDNNQALS) shows a compositional bias: polar residues. Residues 504–515 (FQGHPDLQKDTS) are compositionally biased toward basic and acidic residues. The 114-residue stretch at 586–699 (TLRSITSPLV…SRFVQLVRSK (114 aa)) folds into the Cryptic POLO box 1 (CPB1) domain. A Phosphoserine modification is found at Ser665. A Cryptic POLO box 2 (CPB2) domain is found at 700-813 (SPKITYFTRY…GRKPGSTSSP (114 aa)). Positions 808–828 (GSTSSPKALSPPPSVDSNYPT) are disordered. Ser817 carries the phosphoserine modification. The POLO box domain occupies 886–964 (QLLKSVFVKN…LSSILLMFSN (79 aa)).

Belongs to the protein kinase superfamily. Ser/Thr protein kinase family. CDC5/Polo subfamily. In terms of assembly, homodimer. Interacts with CEP152 (via N-terminus). Interacts with CEP78; this interaction may be important for proper PLK4 localization to the centriole and PLK4-induced overduplication of centrioles. Interacts with CEP131. Interacts simultaneously with TENT5C and CEP192. Interacts with TENT5C; this interaction leads to the TENT5C recruitment in the centrosome. Interacts with CEP85; this interaction may be important in cell migration and centriole assembly. Acetylation by KAT2A and KAT2B impairs kinase activity by shifting the kinase to an inactive conformation. Post-translationally, ubiquitinated; leading to its degradation by the proteasome. Deubiquitinated by USP54; leading to PLK4 stabilization. In terms of processing, tyrosine-phosphorylated by TEC.

It localises to the cytoplasm. Its subcellular location is the cytoskeleton. It is found in the microtubule organizing center. The protein resides in the centrosome. The protein localises to the centriole. It localises to the nucleus. Its subcellular location is the nucleolus. It is found in the cleavage furrow. The catalysed reaction is L-seryl-[protein] + ATP = O-phospho-L-seryl-[protein] + ADP + H(+). The enzyme catalyses L-threonyl-[protein] + ATP = O-phospho-L-threonyl-[protein] + ADP + H(+). Serine/threonine-protein kinase that plays a central role in centriole duplication. Able to trigger procentriole formation on the surface of the parental centriole cylinder, leading to the recruitment of centriole biogenesis proteins such as SASS6, CPAP, CCP110, CEP135 and gamma-tubulin. When overexpressed, it is able to induce centrosome amplification through the simultaneous generation of multiple procentrioles adjoining each parental centriole during S phase. Phosphorylates 'Ser-151' of FBXW5 during the G1/S transition, leading to inhibit FBXW5 ability to ubiquitinate SASS6. Its central role in centriole replication suggests a possible role in tumorigenesis, centrosome aberrations being frequently observed in tumors. Also involved in deuterosome-mediated centriole amplification in multiciliated that can generate more than 100 centrioles. Also involved in trophoblast differentiation by phosphorylating HAND1, leading to disrupt the interaction between HAND1 and MDFIC and activate HAND1. Phosphorylates CDC25C and CHEK2. Required for the recruitment of STIL to the centriole and for STIL-mediated centriole amplification. Phosphorylates CEP131 at 'Ser-78' and PCM1 at 'Ser-372' which is essential for proper organization and integrity of centriolar satellites. This chain is Serine/threonine-protein kinase PLK4, found in Homo sapiens (Human).